Here is a 726-residue protein sequence, read N- to C-terminus: Type VI secretion system spike protein VgrG1c (726 aa).

A disordered region spans residues 502–522; that stretch reads ANATQSGTKSRSSKGGTPANF. Residues 507 to 518 show a composition bias toward low complexity; that stretch reads SGTKSRSSKGGT.

This sequence belongs to the VgrG protein family. In terms of assembly, forms homomultimers. Part of the type VI secretion system (T6SS).

The protein resides in the secreted. Its function is as follows. Part of the H1 type VI secretion system (H1-T6SS) specialized secretion system, which delivers several virulence factors in both prokaryotic and eukaryotic cells during infection. Allows the delivery of the Tse5/RhsP1 toxin to target cells where it exerts its toxicity. This chain is Type VI secretion system spike protein VgrG1c, found in Pseudomonas aeruginosa (strain ATCC 15692 / DSM 22644 / CIP 104116 / JCM 14847 / LMG 12228 / 1C / PRS 101 / PAO1).